The chain runs to 274 residues: 2,3,4,5-tetrahydropyridine-2,6-dicarboxylate N-succinyltransferase (274 aa).

2 residues coordinate substrate: Arg-104 and Asp-141.

The protein belongs to the transferase hexapeptide repeat family. In terms of assembly, homotrimer.

It localises to the cytoplasm. It carries out the reaction (S)-2,3,4,5-tetrahydrodipicolinate + succinyl-CoA + H2O = (S)-2-succinylamino-6-oxoheptanedioate + CoA. It functions in the pathway amino-acid biosynthesis; L-lysine biosynthesis via DAP pathway; LL-2,6-diaminopimelate from (S)-tetrahydrodipicolinate (succinylase route): step 1/3. This Shewanella sp. (strain ANA-3) protein is 2,3,4,5-tetrahydropyridine-2,6-dicarboxylate N-succinyltransferase.